A 464-amino-acid polypeptide reads, in one-letter code: GTPase Der (464 aa).

2 EngA-type G domains span residues 5 to 169 (PTIA…KQKG) and 190 to 368 (IKVA…RESH). GTP-binding positions include 11–18 (GRPNVGKS), 58–62 (DTGGI), 121–124 (NKAD), 196–203 (GRPNAGKS), 243–247 (DTAGM), and 308–311 (NKFD). The 93-residue stretch at 369–461 (NLPTTGQLNR…PVIFSARSRV (93 aa)) folds into the KH-like domain.

It belongs to the TRAFAC class TrmE-Era-EngA-EngB-Septin-like GTPase superfamily. EngA (Der) GTPase family. In terms of assembly, associates with the 50S ribosomal subunit.

GTPase that plays an essential role in the late steps of ribosome biogenesis. The protein is GTPase Der of Akkermansia muciniphila (strain ATCC BAA-835 / DSM 22959 / JCM 33894 / BCRC 81048 / CCUG 64013 / CIP 107961 / Muc).